Consider the following 254-residue polypeptide: Imidazole glycerol phosphate synthase subunit HisF (254 aa).

Residues aspartate 13 and aspartate 132 contribute to the active site.

Belongs to the HisA/HisF family. As to quaternary structure, heterodimer of HisH and HisF.

The protein localises to the cytoplasm. The catalysed reaction is 5-[(5-phospho-1-deoxy-D-ribulos-1-ylimino)methylamino]-1-(5-phospho-beta-D-ribosyl)imidazole-4-carboxamide + L-glutamine = D-erythro-1-(imidazol-4-yl)glycerol 3-phosphate + 5-amino-1-(5-phospho-beta-D-ribosyl)imidazole-4-carboxamide + L-glutamate + H(+). It participates in amino-acid biosynthesis; L-histidine biosynthesis; L-histidine from 5-phospho-alpha-D-ribose 1-diphosphate: step 5/9. Its function is as follows. IGPS catalyzes the conversion of PRFAR and glutamine to IGP, AICAR and glutamate. The HisF subunit catalyzes the cyclization activity that produces IGP and AICAR from PRFAR using the ammonia provided by the HisH subunit. In Wolinella succinogenes (strain ATCC 29543 / DSM 1740 / CCUG 13145 / JCM 31913 / LMG 7466 / NCTC 11488 / FDC 602W) (Vibrio succinogenes), this protein is Imidazole glycerol phosphate synthase subunit HisF.